A 621-amino-acid polypeptide reads, in one-letter code: Type 2 DNA topoisomerase 6 subunit B (621 aa).

Residues N48, D80, 101–102 (SR), 111–118 (GQQGIGIS), and K435 contribute to the ATP site.

Belongs to the TOP6B family. Homodimer. Heterotetramer of two Top6A and two Top6B chains.

The catalysed reaction is ATP-dependent breakage, passage and rejoining of double-stranded DNA.. Relaxes both positive and negative superturns and exhibits a strong decatenase activity. In Methanosarcina barkeri (strain Fusaro / DSM 804), this protein is Type 2 DNA topoisomerase 6 subunit B.